We begin with the raw amino-acid sequence, 210 residues long: Probable glutathione S-transferase gst-36 (210 aa).

Positions 2–79 (PHFKFYYFDV…YLGHQFHRAG (78 aa)) constitute a GST N-terminal domain. Residues Tyr8, Trp39, Lys43, 49-51 (GQV), and 63-64 (QT) each bind glutathione. The GST C-terminal domain occupies 81 to 210 (NAVDCARLDM…YVSQRKATPA (130 aa)).

This sequence belongs to the GST superfamily. Sigma family.

The enzyme catalyses RX + glutathione = an S-substituted glutathione + a halide anion + H(+). Functionally, conjugation of reduced glutathione to a wide number of exogenous and endogenous hydrophobic electrophiles. The sequence is that of Probable glutathione S-transferase gst-36 (gst-36) from Caenorhabditis elegans.